The primary structure comprises 312 residues: Oxidoreductase NAD-binding domain-containing protein 1 (312 aa).

The first 17 residues, 1–17, serve as a signal peptide directing secretion; it reads MACAAVMIPGLLRCSVG. Positions 50–186 constitute an FAD-binding FR-type domain; the sequence is HMERTASVLR…GGVGINPLLS (137 aa). 178 to 183 provides a ligand contact to NAD(+); it reads GVGINP.

In Homo sapiens (Human), this protein is Oxidoreductase NAD-binding domain-containing protein 1 (OXNAD1).